The primary structure comprises 382 residues: Chaperone protein DnaJ (382 aa).

The 65-residue stretch at 6 to 70 folds into the J domain; that stretch reads DYYEILGLPK…EKRAQYDRFG (65 aa). Residues 131-213 form a CR-type zinc finger; that stretch reads GVRKDIDIPR…CGGAGRVRNK (83 aa). Positions 144, 147, 161, 164, 187, 190, 201, and 204 each coordinate Zn(2+). CXXCXGXG motif repeat units lie at residues 144–151, 161–168, 187–194, and 201–208; these read CSTCSGTG, CPTCGGTG, CSTCHGRG, and CPVCGGAG. Positions 146–168 are disordered; that stretch reads TCSGTGAKPGTSPKRCPTCGGTG. The interval 348-382 is disordered; sequence FENLSKGKKPQEEEKSKAEKHKKGIFEKVKDAFES. Over residues 371–382 the composition is skewed to basic and acidic residues; the sequence is GIFEKVKDAFES.

The protein belongs to the DnaJ family. As to quaternary structure, homodimer. Zn(2+) serves as cofactor.

The protein localises to the cytoplasm. Its function is as follows. Participates actively in the response to hyperosmotic and heat shock by preventing the aggregation of stress-denatured proteins and by disaggregating proteins, also in an autonomous, DnaK-independent fashion. Unfolded proteins bind initially to DnaJ; upon interaction with the DnaJ-bound protein, DnaK hydrolyzes its bound ATP, resulting in the formation of a stable complex. GrpE releases ADP from DnaK; ATP binding to DnaK triggers the release of the substrate protein, thus completing the reaction cycle. Several rounds of ATP-dependent interactions between DnaJ, DnaK and GrpE are required for fully efficient folding. Also involved, together with DnaK and GrpE, in the DNA replication of plasmids through activation of initiation proteins. This Methanosarcina acetivorans (strain ATCC 35395 / DSM 2834 / JCM 12185 / C2A) protein is Chaperone protein DnaJ.